The following is a 135-amino-acid chain: Small ribosomal subunit protein bS6 (135 aa).

Over residues 99-120 (QHSSLGRSTAPANPMASNTPRT) the composition is skewed to polar residues. Residues 99–135 (QHSSLGRSTAPANPMASNTPRTEGQEQAKTEPQTAPA) form a disordered region.

This sequence belongs to the bacterial ribosomal protein bS6 family.

Binds together with bS18 to 16S ribosomal RNA. This Synechococcus sp. (strain RCC307) protein is Small ribosomal subunit protein bS6.